Consider the following 260-residue polypeptide: Carbonic anhydrase (260 aa).

Positions 1 to 31 are disordered; it reads MAHAWGYGPADGPESWAESFPIANGPRQSPI. Residues 3–259 enclose the Alpha-carbonic anhydrase domain; that stretch reads HAWGYGPADG…LKGRKVRASF (257 aa). His-64 functions as the Proton acceptor in the catalytic mechanism. Zn(2+)-binding residues include His-94, His-96, and His-119. Residue Tyr-127 is part of the active site. 198 to 199 contributes to the substrate binding site; sequence TT.

This sequence belongs to the alpha-carbonic anhydrase family. Requires Zn(2+) as cofactor.

It catalyses the reaction hydrogencarbonate + H(+) = CO2 + H2O. Functionally, reversible hydration of carbon dioxide. The polypeptide is Carbonic anhydrase (cahz) (Danio rerio (Zebrafish)).